The primary structure comprises 330 residues: Exostosin-like 2 (330 aa).

Topologically, residues 1 to 22 (MRCCHICKLPGRVMGIRVLRLS) are cytoplasmic. Residues 23–43 (LVVILVLLLVAGALTALLPSV) form a helical; Signal-anchor for type II membrane protein membrane-spanning segment. The Lumenal segment spans residues 44-330 (KEDKMLMLRR…FPYANYKRKI (287 aa)). Position 71 (glutamine 71) interacts with UDP-N-acetyl-alpha-D-galactosamine. A UDP-N-acetyl-alpha-D-glucosamine-binding site is contributed by glutamine 71. Asparagine 74 carries N-linked (GlcNAc...) asparagine glycosylation. Residues arginine 75, asparagine 100, asparagine 129, arginine 134, aspartate 150, aspartate 151, aspartate 152, and aspartate 244 each contribute to the UDP-N-acetyl-alpha-D-galactosamine site. UDP-N-acetyl-alpha-D-glucosamine contacts are provided by arginine 75, asparagine 100, asparagine 129, arginine 134, aspartate 150, aspartate 151, aspartate 152, aspartate 244, aspartate 245, and arginine 293. Aspartate 152 provides a ligand contact to Mn(2+). Cysteine 243 and cysteine 296 are oxidised to a cystine. Aspartate 245 is a catalytic residue. Arginine 293 contributes to the UDP-N-acetyl-alpha-D-galactosamine binding site.

The protein belongs to the glycosyltransferase 47 family. The cofactor is Mn(2+). In terms of processing, the soluble form derives from the membrane form by proteolytic processing. Ubiquitous.

It localises to the endoplasmic reticulum membrane. The protein localises to the secreted. It catalyses the reaction 3-O-(beta-D-GlcA-(1-&gt;3)-beta-D-Gal-(1-&gt;3)-beta-D-Gal-(1-&gt;4)-beta-D-Xyl)-L-seryl-[protein] + UDP-N-acetyl-alpha-D-glucosamine = 3-O-(alpha-D-GlcNAc-(1-&gt;4)-beta-D-GlcA-(1-&gt;3)-beta-D-Gal-(1-&gt;3)-beta-D-Gal-(1-&gt;4)-beta-D-Xyl)-L-seryl-[protein] + UDP + H(+). It participates in glycan metabolism; heparan sulfate biosynthesis. Functionally, glycosyltransferase required for the biosynthesis of heparan-sulfate and responsible for the alternating addition of beta-1-4-linked glucuronic acid (GlcA) and alpha-1-4-linked N-acetylglucosamine (GlcNAc) units to nascent heparan sulfate chains. This Homo sapiens (Human) protein is Exostosin-like 2 (EXTL2).